Reading from the N-terminus, the 335-residue chain is MGHPLLLPLLLLLHTCVPASWGLRCMQCKSNGDCRVEECALGQDLCRTTIVRMWEEGEELELVEKSCTHSEKTNRTMSYRTGLKITSLTEVVCGLDLCNQGNSGRAVTFSRSRYLECISCGSSDMSCERGRHQSLQCRSPEEQCLDVVTHWIQEGEEGRPKDDRHLRGCGYLPSCPGSSGFHNNDTFHFLKCCNTTKCNEGPILELENLPQNGHQCYSCKGNSTHGCSSEETFLIDCRGPMNQCLVATGTYEPKNQSYMVRGCVTASMCQRAHLGDAFSMHHINVSCCTESGCNHPDLDIQYRKGAAPQPGPAHLSLTITLLMTARLWGGTLLWT.

Positions 1 to 22 (MGHPLLLPLLLLLHTCVPASWG) are cleaved as a signal peptide. 3 UPAR/Ly6 domains span residues 23–114 (LRCM…RSRY), 115–213 (LECI…PQNG), and 214–305 (HQCY…YRKG). Disulfide bonds link Cys25–Cys46, Cys28–Cys34, and Cys39–Cys67. The N-linked (GlcNAc...) asparagine glycan is linked to Asn74. Disulfide bonds link Cys93/Cys98, Cys117/Cys144, Cys120/Cys127, Cys137/Cys169, Cys175/Cys192, Cys193/Cys198, Cys216/Cys244, Cys219/Cys227, Cys237/Cys263, Cys269/Cys287, and Cys288/Cys293. N-linked (GlcNAc...) asparagine glycosylation is found at Asn184, Asn194, Asn222, Asn255, and Asn284. The GPI-anchor amidated glycine moiety is linked to residue Gly305. Positions 306 to 335 (AAPQPGPAHLSLTITLLMTARLWGGTLLWT) are cleaved as a propeptide — removed in mature form.

Monomer. Interacts (via the UPAR/Ly6 domains) with SRPX2. Interacts with MRC2. Interacts with FAP (seprase); the interaction occurs at the cell surface of invadopodia membrane. Interacts with SORL1 (via N-terminal ectodomain); this interaction decreases PLAUR internalization. The ternary complex composed of PLAUR-PLAU-SERPINE1 also interacts with SORL1.

The protein localises to the cell membrane. The protein resides in the cell projection. It is found in the invadopodium membrane. In terms of biological role, acts as a receptor for urokinase plasminogen activator. Plays a role in localizing and promoting plasmin formation. Mediates the proteolysis-independent signal transduction activation effects of U-PA. It is subject to negative-feedback regulation by U-PA which cleaves it into an inactive form. This chain is Urokinase plasminogen activator surface receptor (PLAUR), found in Macaca fascicularis (Crab-eating macaque).